The primary structure comprises 293 residues: D-psicose 3-epimerase (293 aa).

Substrate contacts are provided by Tyr6 and Ala107. The active-site Proton donor/acceptor is the Glu150. Glu150 contacts Mn(2+). Substrate contacts are provided by residues Glu156 and 183–186 (DTFH). Positions 183 and 209 each coordinate Mn(2+). Arg215 is a substrate binding site. The active-site Proton donor/acceptor is Glu244. Glu244 serves as a coordination point for Mn(2+).

Belongs to the hyi family. Homotetramer. Requires Mn(2+) as cofactor. It depends on Co(2+) as a cofactor.

It catalyses the reaction D-allulose = keto-D-fructose. Its function is as follows. Involved in the biosynthesis of D-psicose. Catalyzes the reversible epimerization of D-fructose at the C3 position to yield D-psicose. The enzyme is highly specific for D-psicose and shows very low activity with D-tagatose. The chain is D-psicose 3-epimerase from Ruminiclostridium cellulolyticum (strain ATCC 35319 / DSM 5812 / JCM 6584 / H10) (Clostridium cellulolyticum).